A 162-amino-acid polypeptide reads, in one-letter code: Endoribonuclease YbeY (162 aa).

Zn(2+)-binding residues include H127, H131, and H137.

It belongs to the endoribonuclease YbeY family. Requires Zn(2+) as cofactor.

Its subcellular location is the cytoplasm. In terms of biological role, single strand-specific metallo-endoribonuclease involved in late-stage 70S ribosome quality control and in maturation of the 3' terminus of the 16S rRNA. This Acetivibrio thermocellus (strain ATCC 27405 / DSM 1237 / JCM 9322 / NBRC 103400 / NCIMB 10682 / NRRL B-4536 / VPI 7372) (Clostridium thermocellum) protein is Endoribonuclease YbeY.